The following is a 792-amino-acid chain: uncharacterized protein (792 aa).

Residue 361–362 participates in substrate binding; that stretch reads WD. Residue Glu488 is the Proton donor of the active site. 590–591 is a substrate binding site; it reads KQ. Residues 753 to 792 form a disordered region; that stretch reads DSPSTIAVRDRKPLLPPPSQPPGREPVSRRHKSLIISAAR. Pro residues predominate over residues 766–776; the sequence is LLPPPSQPPGR.

Belongs to the glycosyl hydrolase 65 family.

This is an uncharacterized protein from Mycobacterium leprae (strain TN).